We begin with the raw amino-acid sequence, 61 residues long: Sec-independent protein translocase protein TatA (61 aa).

Residues 2–22 (GLSGISPLSLLLILAIIVALF) traverse the membrane as a helical segment.

Belongs to the TatA/E family. As to quaternary structure, the Tat system comprises two distinct complexes: a TatABC complex, containing multiple copies of TatA, TatB and TatC subunits, and a separate TatA complex, containing only TatA subunits. Substrates initially bind to the TatABC complex, which probably triggers association of the separate TatA complex to form the active translocon.

It is found in the cell inner membrane. Part of the twin-arginine translocation (Tat) system that transports large folded proteins containing a characteristic twin-arginine motif in their signal peptide across membranes. TatA could form the protein-conducting channel of the Tat system. The polypeptide is Sec-independent protein translocase protein TatA (Legionella pneumophila (strain Paris)).